The following is a 118-amino-acid chain: Small ribosomal subunit protein uS13 (118 aa).

A disordered region spans residues 94-118 (SLPLRGQRTKTNARTRKGPRKPIKK).

Belongs to the universal ribosomal protein uS13 family. In terms of assembly, part of the 30S ribosomal subunit. Forms a loose heterodimer with protein S19. Forms two bridges to the 50S subunit in the 70S ribosome.

Functionally, located at the top of the head of the 30S subunit, it contacts several helices of the 16S rRNA. In the 70S ribosome it contacts the 23S rRNA (bridge B1a) and protein L5 of the 50S subunit (bridge B1b), connecting the 2 subunits; these bridges are implicated in subunit movement. Contacts the tRNAs in the A and P-sites. The chain is Small ribosomal subunit protein uS13 from Vibrio parahaemolyticus serotype O3:K6 (strain RIMD 2210633).